The sequence spans 509 residues: Dihydrolipoyl dehydrogenase, mitochondrial (509 aa).

Residues 1–35 (MQSWSRVYCSLAKKGHFNRLSHGLQGASSVPLRTY) constitute a mitochondrion transit peptide. An N6-acetyllysine; alternate modification is found at lysine 66. Lysine 66 bears the N6-succinyllysine; alternate mark. Residues 71-80 (EKNETLGGTC) and lysine 89 contribute to the FAD site. Cysteine 80 and cysteine 85 are oxidised to a cystine. N6-acetyllysine; alternate is present on residues lysine 104, lysine 122, lysine 132, and lysine 143. N6-succinyllysine; alternate is present on residues lysine 104, lysine 122, lysine 132, and lysine 143. Glycine 154 is an FAD binding site. Residue lysine 159 is modified to N6-succinyllysine. 183–185 (TGS) contributes to the FAD binding site. Residues 220 to 227 (GAGVIGVE) and glutamate 243 contribute to the NAD(+) site. N6-succinyllysine occurs at positions 273 and 277. Valine 278 contributes to the NAD(+) binding site. Residues serine 285 and serine 297 each carry the phosphoserine modification. Residue glycine 314 coordinates NAD(+). Lysine 346 is modified (N6-acetyllysine). FAD contacts are provided by residues aspartate 355 and 361–364 (MLAH). N6-acetyllysine; alternate is present on lysine 410. Lysine 410 bears the N6-succinyllysine; alternate mark. N6-acetyllysine occurs at positions 417 and 420. Lysine 430 is subject to N6-succinyllysine. The Proton acceptor role is filled by histidine 487. Serine 502 bears the Phosphoserine mark. Lysine 505 is subject to N6-acetyllysine; alternate. Lysine 505 bears the N6-succinyllysine; alternate mark.

Belongs to the class-I pyridine nucleotide-disulfide oxidoreductase family. Homodimer. Part of the multimeric pyruvate dehydrogenase complex that contains multiple copies of pyruvate dehydrogenase (subunits PDHA (PDHA1 or PDHA2) and PDHB, E1), dihydrolipoamide acetyltransferase (DLAT, E2) and lipoamide dehydrogenase (DLD, E3). These subunits are bound to an inner core composed of about 48 DLAT and 12 PDHX molecules (by non covalent bonds). The 2-oxoglutarate dehydrogenase complex is composed of OGDH (2-oxoglutarate dehydrogenase; E1), DLST (dihydrolipoamide succinyltransferase; E2), DLD (dihydrolipoamide dehydrogenase; E3) and the assembly factor KGD4. It contains multiple copies of the three enzymatic components (E1, E2 and E3). In the nucleus, the 2-oxoglutarate dehydrogenase complex associates with KAT2A. Interacts with PDHX. The cofactor is FAD. Post-translationally, tyrosine phosphorylated.

It is found in the mitochondrion matrix. Its subcellular location is the nucleus. It localises to the cell projection. The protein localises to the cilium. The protein resides in the flagellum. It is found in the cytoplasmic vesicle. Its subcellular location is the secretory vesicle. It localises to the acrosome. It catalyses the reaction N(6)-[(R)-dihydrolipoyl]-L-lysyl-[protein] + NAD(+) = N(6)-[(R)-lipoyl]-L-lysyl-[protein] + NADH + H(+). Functionally, lipoamide dehydrogenase is a component of the glycine cleavage system as well as an E3 component of three alpha-ketoacid dehydrogenase complexes (pyruvate-, alpha-ketoglutarate-, and branched-chain amino acid-dehydrogenase complex). The 2-oxoglutarate dehydrogenase complex is mainly active in the mitochondrion. A fraction of the 2-oxoglutarate dehydrogenase complex also localizes in the nucleus and is required for lysine succinylation of histones: associates with KAT2A on chromatin and provides succinyl-CoA to histone succinyltransferase KAT2A. In monomeric form may have additional moonlighting function as serine protease. Involved in the hyperactivation of spermatazoa during capacitation and in the spermatazoal acrosome reaction. The protein is Dihydrolipoyl dehydrogenase, mitochondrial (Dld) of Rattus norvegicus (Rat).